The primary structure comprises 136 residues: Early E3 15.3 kDa protein (136 aa).

Belongs to the adenoviridae E3_15 family.

Protects virus-infected cells from TNF-induced cytolysis. The chain is Early E3 15.3 kDa protein from Human adenovirus B serotype 3 (HAdV-3).